A 191-amino-acid polypeptide reads, in one-letter code: dCTP deaminase (191 aa).

Residues 112–117 (KSTYAR), 136–138 (TLE), Gln-157, Tyr-173, and Gln-183 each bind dCTP. The active-site Proton donor/acceptor is the Glu-138.

It belongs to the dCTP deaminase family. In terms of assembly, homotrimer.

It catalyses the reaction dCTP + H2O + H(+) = dUTP + NH4(+). It functions in the pathway pyrimidine metabolism; dUMP biosynthesis; dUMP from dCTP (dUTP route): step 1/2. Its function is as follows. Catalyzes the deamination of dCTP to dUTP. The chain is dCTP deaminase from Xylella fastidiosa (strain 9a5c).